The sequence spans 117 residues: NADH-ubiquinone oxidoreductase chain 3 (117 aa).

A run of 3 helical transmembrane segments spans residues 3–23 (LLLTILFITTILSLILAIVSF), 56–76 (FFLVAILFLLFDLEIALLLPL), and 85–105 (PMFTLLWASALLIMLTLGLIY).

This sequence belongs to the complex I subunit 3 family.

Its subcellular location is the mitochondrion membrane. The enzyme catalyses a ubiquinone + NADH + 5 H(+)(in) = a ubiquinol + NAD(+) + 4 H(+)(out). In terms of biological role, core subunit of the mitochondrial membrane respiratory chain NADH dehydrogenase (Complex I) that is believed to belong to the minimal assembly required for catalysis. Complex I functions in the transfer of electrons from NADH to the respiratory chain. The immediate electron acceptor for the enzyme is believed to be ubiquinone. The protein is NADH-ubiquinone oxidoreductase chain 3 (MT-ND3) of Tetraodon nigroviridis (Spotted green pufferfish).